Here is a 394-residue protein sequence, read N- to C-terminus: uncharacterized protein (394 aa).

The next 11 helical transmembrane spans lie at 10–30, 50–70, 79–99, 100–120, 138–158, 166–186, 218–238, 243–263, 291–311, 337–357, and 364–384; these read PALI…NYYA, FIVT…VPLG, IVSM…SQSL, AMMI…QILV, TIMS…GLLA, VFWV…RGLP, LLGC…AFLL, FNYS…GALG, WLAI…ILVL, LTAG…LISA, and GWAG…LVWW.

It belongs to the major facilitator superfamily.

It is found in the cell inner membrane. This is an uncharacterized protein from Escherichia coli (strain K12).